The chain runs to 359 residues: Phosphoserine aminotransferase (359 aa).

Position 41 (Arg41) interacts with L-glutamate. Pyridoxal 5'-phosphate is bound by residues 75–76 (AS), Trp101, Thr151, Asp171, and Gln194. The residue at position 195 (Lys195) is an N6-(pyridoxal phosphate)lysine. Pyridoxal 5'-phosphate is bound at residue 236–237 (NT).

The protein belongs to the class-V pyridoxal-phosphate-dependent aminotransferase family. SerC subfamily. As to quaternary structure, homodimer. It depends on pyridoxal 5'-phosphate as a cofactor.

The protein resides in the cytoplasm. It catalyses the reaction O-phospho-L-serine + 2-oxoglutarate = 3-phosphooxypyruvate + L-glutamate. The enzyme catalyses 4-(phosphooxy)-L-threonine + 2-oxoglutarate = (R)-3-hydroxy-2-oxo-4-phosphooxybutanoate + L-glutamate. It functions in the pathway amino-acid biosynthesis; L-serine biosynthesis; L-serine from 3-phospho-D-glycerate: step 2/3. It participates in cofactor biosynthesis; pyridoxine 5'-phosphate biosynthesis; pyridoxine 5'-phosphate from D-erythrose 4-phosphate: step 3/5. Catalyzes the reversible conversion of 3-phosphohydroxypyruvate to phosphoserine and of 3-hydroxy-2-oxo-4-phosphonooxybutanoate to phosphohydroxythreonine. The polypeptide is Phosphoserine aminotransferase (Thiobacillus denitrificans (strain ATCC 25259 / T1)).